The chain runs to 53 residues: Bowman-Birk type proteinase inhibitor II-4 (53 aa).

Cystine bridges form between Cys-8–Cys-23, Cys-13–Cys-21, Cys-30–Cys-37, and Cys-34–Cys-49.

It belongs to the Bowman-Birk serine protease inhibitor family.

The protein is Bowman-Birk type proteinase inhibitor II-4 of Triticum aestivum (Wheat).